The following is a 467-amino-acid chain: MVLLNSEEVSCNDHHQVDVVAAAGLQCSGDMLGDKQLVSQVILEGLEIEEPPADEMEAAEKKAGISRLMAGYVQHLQHRSAYHLGYPLNFDYDFSPLAPFLNFSLNNAGDPFAKVNNSVHSRQFEVAVLNWFANFWDVQRDQFWGYITSGGTEGNLYGLLVGRELFPDGILYASNDSHYSVFKAAKMYRVKCIRIATTVSGEMNYADLKSKLQHNTNSPAIINANIGTTFKGAVDDIDQIISTLEKCGFQNRYYIHCDSALSGMMTPFMKQAPKVSFKKPIGSISVSGHKFLGCPMPCGVVITRLEHAEVLSTDIEYIASRDSTITGSRNGHAPIFLWYTLSKKGYKGLLKEVHICMGNARYLEVLLKQVGISASCNTLSNIVVFERPKDERIVCRWQLACEGNLAHIVVMPNVTFEKLTVFVEELAEKRKDWYQDKGFDIPCLAVDIGKENCYCNLHAKKLRIPKM.

Position 178 (histidine 178) interacts with substrate. Lysine 290 is subject to N6-(pyridoxal phosphate)lysine.

The protein belongs to the group II decarboxylase family. It depends on pyridoxal 5'-phosphate as a cofactor.

The enzyme catalyses L-serine + H(+) = ethanolamine + CO2. In terms of biological role, catalyzes the biosynthesis of ethanolamine from serine. Decarboxylation of free serine is the major source of ethanolamine production in plants and ethanolamine metabolism is crucial for the synthesis of choline, phosphatidylethanolamine (PE) and phosphatidylcholine (PC), and thus for plant growth. The chain is Serine decarboxylase 2 from Oryza sativa subsp. japonica (Rice).